A 75-amino-acid polypeptide reads, in one-letter code: Pi-hexatoxin-Hi1a (75 aa).

6 disulfides stabilise this stretch: C3-C18, C10-C23, C17-C33, C40-C55, C47-C60, and C54-C71. 2 Domain repeats span residues 3–33 and 40–71; these read CIRKWLSCVDRKNDCCEGLECYKRRHSFEVC and CLVKWKQCDGRERDCCAGLECWKRSGNKSSVC. The tract at residues 3–71 is 2 X approximate repeats with cysteine pattern C-C-CC-C-C; sequence CIRKWLSCVD…KRSGNKSSVC (69 aa).

This sequence belongs to the psalmotoxin-1 family. Double-knot toxin subfamily. As to expression, expressed by the venom gland.

It is found in the secreted. Functionally, this toxin potently and selectively inhibits ASIC1a (IC(50)=0.4 nM on rASIC1a and IC(50)=0.52 nM on hASIC1a), an isoform of the gene ASIC1. It incompletely inhibits ASIC1a activation in a pH-independent and slowly reversible manner (Tau(off)=14.2 minutes for rASIC1a and 31.8 minutes for hASIC1a). This toxin acts by binding to and stabilizing the closed state of the channel, thereby impeding the transition into a conducting state. This toxin may bind to the acidic pocket of ASIC1a, since mutation of a key residue of this pocket (Arg-350) abolishes the ability of the toxin to inhibit ASIC1a. In addition, it shows antiparasitic activities, since it moderately inhibits the larval development of the major pathogenic nematode of ruminants (H.contortus, IC(50)=22.9 uM). In vivo, this toxin protects the brain from neuronal injury when administered up to 8 hours after stroke onset. The protein is Pi-hexatoxin-Hi1a of Hadronyche infensa (Fraser island funnel-web spider).